We begin with the raw amino-acid sequence, 545 residues long: MTTNYIFVTGGVVSSLGKGIAAASLAAILEARGLNVTIMKLDPYINVDPGTMSPTQHGEVFVTEDGAETDLDLGHYERFIRTKMTRRNNFTTGRIYSEVLRKERRGDYLGATIQVIPHITNAIKERIIEGGEGHDVVLVEIGGTVGDIESLPFLEAIRQMAVDVGREHTLYMHLTLVPYLAAAGEVKTKPTQHSVKELLSIGIQPDVLICRSDRAVPANERAKIALFCNVPEKAVISLKDVDSIYKIPGLLKSQGLDDYICKRFSLTCPEANLAEWEQVLYEESNPGGEVTIGMIGKYVELPDAYKSVIEALKHGGLKNRLTVNIKLIDSQDVETRGEEMLKELDAILIPGGFGYRGVEGKVLAARYAREHNIPYLGICLGMQVALMEFARNVAGMENANSTEFVPDCKYPVVALITEWRDEDGNVEIRTEESDLGGTMRVGGQQCHLTEGSLVRQMYGEPTIVERHRHRYEVNNMLLKQIEAAGLRVAGRSADNKLVEIIELPDHPWFVACQFHPEFTSTPRDGHPLFAGFVKAAGDYQKRQVK.

An amidoligase domain region spans residues 1–266 (MTTNYIFVTG…DDYICKRFSL (266 aa)). Residue S14 participates in CTP binding. S14 contacts UTP. ATP is bound by residues 15–20 (SLGKGI) and D72. Positions 72 and 140 each coordinate Mg(2+). CTP is bound by residues 147–149 (DIE), 187–192 (KTKPTQ), and K223. Residues 187–192 (KTKPTQ) and K223 contribute to the UTP site. 239 to 241 (KDV) contacts ATP. The region spanning 291-542 (TIGMIGKYVE…VKAAGDYQKR (252 aa)) is the Glutamine amidotransferase type-1 domain. Residue G352 participates in L-glutamine binding. The active-site Nucleophile; for glutamine hydrolysis is the C379. Residues 380–383 (LGMQ), E403, and R470 each bind L-glutamine. Active-site residues include H515 and E517.

Belongs to the CTP synthase family. As to quaternary structure, homotetramer.

The enzyme catalyses UTP + L-glutamine + ATP + H2O = CTP + L-glutamate + ADP + phosphate + 2 H(+). It carries out the reaction L-glutamine + H2O = L-glutamate + NH4(+). The catalysed reaction is UTP + NH4(+) + ATP = CTP + ADP + phosphate + 2 H(+). Its pathway is pyrimidine metabolism; CTP biosynthesis via de novo pathway; CTP from UDP: step 2/2. With respect to regulation, allosterically activated by GTP, when glutamine is the substrate; GTP has no effect on the reaction when ammonia is the substrate. The allosteric effector GTP functions by stabilizing the protein conformation that binds the tetrahedral intermediate(s) formed during glutamine hydrolysis. Inhibited by the product CTP, via allosteric rather than competitive inhibition. Its function is as follows. Catalyzes the ATP-dependent amination of UTP to CTP with either L-glutamine or ammonia as the source of nitrogen. Regulates intracellular CTP levels through interactions with the four ribonucleotide triphosphates. This Yersinia pseudotuberculosis serotype O:1b (strain IP 31758) protein is CTP synthase.